The following is a 515-amino-acid chain: Maturase K (515 aa).

It belongs to the intron maturase 2 family. MatK subfamily.

The protein resides in the plastid. The protein localises to the chloroplast. In terms of biological role, usually encoded in the trnK tRNA gene intron. Probably assists in splicing its own and other chloroplast group II introns. In Helonias bullata (Swamp pink), this protein is Maturase K.